The sequence spans 97 residues: Conotoxin Cal6.1b (97 aa).

Positions 1 to 22 (MKLTTVLVVALLVLAACQFTVT) are cleaved as a signal peptide. Positions 22-46 (TDNSGDDPENPSLRSAGENQNPDST) are disordered. Positions 23-68 (DNSGDDPENPSLRSAGENQNPDSTKTITAWATRDMTNMRRGLNRPS) are excised as a propeptide. 3 disulfide bridges follow: cysteine 71–cysteine 87, cysteine 78–cysteine 91, and cysteine 86–cysteine 96.

It belongs to the conotoxin O1 superfamily. Expressed by the venom duct.

It localises to the secreted. Probable neurotoxin with unknown target. Possibly targets ion channels. The polypeptide is Conotoxin Cal6.1b (Californiconus californicus (California cone)).